The following is a 563-amino-acid chain: Methylcrotonoyl-CoA carboxylase beta chain, mitochondrial (563 aa).

Residues 1 to 22 (MWGALRSVLRPCSRASVPRQRA) constitute a mitochondrion transit peptide. The CoA carboxyltransferase N-terminal domain maps to 49 to 306 (MKALVNQLHE…QKKLDVTVEP (258 aa)). The tract at residues 49–555 (MKALVNQLHE…SAALNAPIQR (507 aa)) is carboxyltransferase. K70 carries the N6-acetyllysine; alternate modification. Residue K70 is modified to N6-succinyllysine; alternate. An N6-succinyllysine modification is found at K141. Residues 309-555 (EPLFPADELY…SAALNAPIQR (247 aa)) enclose the CoA carboxyltransferase C-terminal domain. The tract at residues 343–372 (RFNEFKALYGDTLVTGFARIFGYPVGIIGN) is acyl-CoA binding. K433 bears the N6-succinyllysine mark. K495 is subject to N6-acetyllysine; alternate. K495 is modified (N6-succinyllysine; alternate). K511 bears the N6-acetyllysine mark.

The protein belongs to the AccD/PCCB family. Probably a dodecamer composed of six biotin-containing alpha subunits (MCCC1) and six beta (MCCC2) subunits.

It localises to the mitochondrion matrix. The enzyme catalyses 3-methylbut-2-enoyl-CoA + hydrogencarbonate + ATP = 3-methyl-(2E)-glutaconyl-CoA + ADP + phosphate + H(+). Its pathway is amino-acid degradation; L-leucine degradation; (S)-3-hydroxy-3-methylglutaryl-CoA from 3-isovaleryl-CoA: step 2/3. In terms of biological role, carboxyltransferase subunit of the 3-methylcrotonyl-CoA carboxylase, an enzyme that catalyzes the conversion of 3-methylcrotonyl-CoA to 3-methylglutaconyl-CoA, a critical step for leucine and isovaleric acid catabolism. This chain is Methylcrotonoyl-CoA carboxylase beta chain, mitochondrial (Mccc2), found in Rattus norvegicus (Rat).